A 160-amino-acid polypeptide reads, in one-letter code: D-aminoacyl-tRNA deacylase (160 aa).

Positions 146–147 (GP) match the Gly-cisPro motif, important for rejection of L-amino acids motif.

Belongs to the DTD family. As to quaternary structure, homodimer.

The protein resides in the cytoplasm. It catalyses the reaction glycyl-tRNA(Ala) + H2O = tRNA(Ala) + glycine + H(+). The catalysed reaction is a D-aminoacyl-tRNA + H2O = a tRNA + a D-alpha-amino acid + H(+). In terms of biological role, an aminoacyl-tRNA editing enzyme that deacylates mischarged D-aminoacyl-tRNAs. Also deacylates mischarged glycyl-tRNA(Ala), protecting cells against glycine mischarging by AlaRS. Acts via tRNA-based rather than protein-based catalysis; rejects L-amino acids rather than detecting D-amino acids in the active site. By recycling D-aminoacyl-tRNA to D-amino acids and free tRNA molecules, this enzyme counteracts the toxicity associated with the formation of D-aminoacyl-tRNA entities in vivo and helps enforce protein L-homochirality. The chain is D-aminoacyl-tRNA deacylase from Desulfovibrio desulfuricans (strain ATCC 27774 / DSM 6949 / MB).